Here is a 213-residue protein sequence, read N- to C-terminus: Holliday junction resolvase RecU (213 aa).

Residues T98, D100, E113, and Q132 each contribute to the Mg(2+) site.

It belongs to the RecU family. Mg(2+) serves as cofactor.

The protein resides in the cytoplasm. The catalysed reaction is Endonucleolytic cleavage at a junction such as a reciprocal single-stranded crossover between two homologous DNA duplexes (Holliday junction).. Functionally, endonuclease that resolves Holliday junction intermediates in genetic recombination. Cleaves mobile four-strand junctions by introducing symmetrical nicks in paired strands. Promotes annealing of linear ssDNA with homologous dsDNA. Required for DNA repair, homologous recombination and chromosome segregation. This chain is Holliday junction resolvase RecU, found in Ligilactobacillus salivarius (strain UCC118) (Lactobacillus salivarius).